We begin with the raw amino-acid sequence, 89 residues long: Co-chaperonin GroES (89 aa).

Belongs to the GroES chaperonin family. Heptamer of 7 subunits arranged in a ring. Interacts with the chaperonin GroEL.

The protein resides in the cytoplasm. Its function is as follows. Together with the chaperonin GroEL, plays an essential role in assisting protein folding. The GroEL-GroES system forms a nano-cage that allows encapsulation of the non-native substrate proteins and provides a physical environment optimized to promote and accelerate protein folding. GroES binds to the apical surface of the GroEL ring, thereby capping the opening of the GroEL channel. The polypeptide is Co-chaperonin GroES (Kosmotoga olearia (strain ATCC BAA-1733 / DSM 21960 / TBF 19.5.1)).